The chain runs to 288 residues: Wilms tumor protein homolog (288 aa).

The disordered stretch occupies residues 1-21; it reads QGYSTVAFDGPPSYGHAPSHH. The 9aaTAD signature appears at 90 to 98; that stretch reads MTWNQMNLG. 3 consecutive C2H2-type zinc fingers follow at residues 162-186, 192-216, and 222-244; these read FMCA…SRKH, YQCD…QRRH, and FQCK…TRTH. Important for interaction with target DNA regions lie at residues 206 to 220 and 232 to 240; these read SDQL…TGVK and SRSDHLKTH. Residues 247–249 carry the KTS motif motif; the sequence is KTS. A C2H2-type 4 zinc finger spans residues 253–277; it reads FSCRWPSCQKKFARSDELVRHHNMH.

The protein belongs to the EGR C2H2-type zinc-finger protein family.

It localises to the nucleus speckle. The protein localises to the nucleus. The protein resides in the nucleoplasm. Its subcellular location is the cytoplasm. In terms of biological role, transcription factor that plays an important role in cellular development and cell survival. Recognizes and binds to the DNA sequence 5'-GCG(T/G)GGGCG-3'. Regulates the expression of numerous target genes. Plays an essential role for development of the urogenital system. It has a tumor suppressor as well as an oncogenic role in tumor formation. Function may be isoform-specific: isoforms lacking the KTS motif may act as transcription factors. Isoforms containing the KTS motif may bind mRNA and play a role in mRNA metabolism or splicing. The sequence is that of Wilms tumor protein homolog (WT1) from Alligator mississippiensis (American alligator).